A 342-amino-acid polypeptide reads, in one-letter code: Ribosomal RNA small subunit methyltransferase C (342 aa).

Belongs to the methyltransferase superfamily. RsmC family. Monomer.

The protein localises to the cytoplasm. The catalysed reaction is guanosine(1207) in 16S rRNA + S-adenosyl-L-methionine = N(2)-methylguanosine(1207) in 16S rRNA + S-adenosyl-L-homocysteine + H(+). Its function is as follows. Specifically methylates the guanine in position 1207 of 16S rRNA in the 30S particle. The protein is Ribosomal RNA small subunit methyltransferase C of Klebsiella pneumoniae subsp. pneumoniae (strain ATCC 700721 / MGH 78578).